The sequence spans 429 residues: Enolase (429 aa).

A (2R)-2-phosphoglycerate-binding site is contributed by Gln-162. Glu-204 (proton donor) is an active-site residue. Asp-241, Glu-283, and Asp-310 together coordinate Mg(2+). (2R)-2-phosphoglycerate contacts are provided by Lys-335, Arg-364, Ser-365, and Lys-386. The Proton acceptor role is filled by Lys-335.

Belongs to the enolase family. Mg(2+) serves as cofactor.

It is found in the cytoplasm. Its subcellular location is the secreted. It localises to the cell surface. It carries out the reaction (2R)-2-phosphoglycerate = phosphoenolpyruvate + H2O. It participates in carbohydrate degradation; glycolysis; pyruvate from D-glyceraldehyde 3-phosphate: step 4/5. In terms of biological role, catalyzes the reversible conversion of 2-phosphoglycerate (2-PG) into phosphoenolpyruvate (PEP). It is essential for the degradation of carbohydrates via glycolysis. This Mycobacterium leprae (strain TN) protein is Enolase.